A 1270-amino-acid polypeptide reads, in one-letter code: DNA-directed RNA polymerase subunit beta (1270 aa).

The protein belongs to the RNA polymerase beta chain family. As to quaternary structure, the RNAP catalytic core consists of 2 alpha, 1 beta, 1 beta' and 1 omega subunit. When a sigma factor is associated with the core the holoenzyme is formed, which can initiate transcription.

The catalysed reaction is RNA(n) + a ribonucleoside 5'-triphosphate = RNA(n+1) + diphosphate. Its function is as follows. DNA-dependent RNA polymerase catalyzes the transcription of DNA into RNA using the four ribonucleoside triphosphates as substrates. This is DNA-directed RNA polymerase subunit beta from Phocaeicola vulgatus (strain ATCC 8482 / DSM 1447 / JCM 5826 / CCUG 4940 / NBRC 14291 / NCTC 11154) (Bacteroides vulgatus).